A 235-amino-acid polypeptide reads, in one-letter code: Ribosomal RNA small subunit methyltransferase G (235 aa).

S-adenosyl-L-methionine-binding positions include Gly98, Met103, 149–150 (VE), and Arg164.

The protein belongs to the methyltransferase superfamily. RNA methyltransferase RsmG family.

It is found in the cytoplasm. The catalysed reaction is guanosine(527) in 16S rRNA + S-adenosyl-L-methionine = N(7)-methylguanosine(527) in 16S rRNA + S-adenosyl-L-homocysteine. Its function is as follows. Specifically methylates the N7 position of guanine in position 527 of 16S rRNA. In Cupriavidus metallidurans (strain ATCC 43123 / DSM 2839 / NBRC 102507 / CH34) (Ralstonia metallidurans), this protein is Ribosomal RNA small subunit methyltransferase G.